A 311-amino-acid polypeptide reads, in one-letter code: Malate dehydrogenase (311 aa).

Residues 7–13 and D34 each bind NAD(+); that span reads GAAGGIG. 2 residues coordinate substrate: R81 and R87. NAD(+) is bound by residues N94 and 117–119; that span reads ITN. Residues N119 and R153 each contribute to the substrate site. H177 (proton acceptor) is an active-site residue. M227 lines the NAD(+) pocket.

Belongs to the LDH/MDH superfamily. MDH type 1 family. As to quaternary structure, homodimer.

It catalyses the reaction (S)-malate + NAD(+) = oxaloacetate + NADH + H(+). In terms of biological role, catalyzes the reversible oxidation of malate to oxaloacetate. This Erwinia tasmaniensis (strain DSM 17950 / CFBP 7177 / CIP 109463 / NCPPB 4357 / Et1/99) protein is Malate dehydrogenase.